The sequence spans 438 residues: MADYQDKNVVIIGLGLTGLSCVDFFLARGVTPRVMDTRVTPPGLDKLPQEVERHVGGLNDEWLLAADLIVASPGIALAHPSLSAAASAGVEIVGDIELFCREAQAPIVAITGSNGKSTVTTLVGEMAKAAGVNVGVGGNIGLPALMLLDADRELYVLELSSFQLETTSSLQAAAATVLNVTEDHMDRYPFGLQQYRAAKLRVYEKAKVCVVNADDALTMPVRGADERCVSFGVNMGDYHLNRQQGETWLRVKGEKVLNVKEMKLSGQHNYTNALAALALADAVGLPRASSLKALTTFTGLAHRFQLALEHNGVRWINDSKATNVGSTEAALNGLHVDGTLHLLLGGDGKSADFSPLARYLTGDRIRLYCFGRDGAQLAALRPEIAQQTETMEEAMRLLAPRVQPGDMVLLSPACASLDQFKNFEQRGDVFTRLAKELG.

ATP is bound at residue Gly-112–Thr-118.

Belongs to the MurCDEF family.

Its subcellular location is the cytoplasm. The catalysed reaction is UDP-N-acetyl-alpha-D-muramoyl-L-alanine + D-glutamate + ATP = UDP-N-acetyl-alpha-D-muramoyl-L-alanyl-D-glutamate + ADP + phosphate + H(+). It functions in the pathway cell wall biogenesis; peptidoglycan biosynthesis. Functionally, cell wall formation. Catalyzes the addition of glutamate to the nucleotide precursor UDP-N-acetylmuramoyl-L-alanine (UMA). The protein is UDP-N-acetylmuramoylalanine--D-glutamate ligase of Salmonella paratyphi A (strain ATCC 9150 / SARB42).